A 214-amino-acid chain; its full sequence is Ribonuclease HII (214 aa).

The RNase H type-2 domain occupies 26–214 (EIVCGVDEAG…PVREAFDLIR (189 aa)). Residues aspartate 32, glutamate 33, and aspartate 124 each coordinate a divalent metal cation.

The protein belongs to the RNase HII family. Requires Mn(2+) as cofactor. Mg(2+) serves as cofactor.

Its subcellular location is the cytoplasm. It catalyses the reaction Endonucleolytic cleavage to 5'-phosphomonoester.. Endonuclease that specifically degrades the RNA of RNA-DNA hybrids. This chain is Ribonuclease HII, found in Burkholderia pseudomallei (strain 668).